The primary structure comprises 729 residues: Glycine--tRNA ligase (729 aa).

Residues 1 to 33 (MPCLLPSLLRATRAALPLLSPPRVVAASASQRL) constitute a mitochondrion transit peptide. Positions 53-109 (LLAPLRLAVRQQGDFVRKLKEDKAPQVDVDRAVAELKARKRVLEAKELALQPKDDIV) constitute a WHEP-TRS domain. At K194 the chain carries N6-acetyllysine. E289 contacts glycine. Residues 321-323 (RNE) and 332-333 (RV) contribute to the ATP site. E340 is a binding site for glycine. Y443 bears the Phosphotyrosine mark. Residue 447–448 (EI) participates in ATP binding. An N6-acetyllysine modification is found at K491. 566-568 (EPS) lines the glycine pocket. Residue R573 participates in ATP binding. S690 bears the Phosphoserine mark. Residue T726 is modified to Phosphothreonine.

The protein belongs to the class-II aminoacyl-tRNA synthetase family. As to quaternary structure, homodimer.

The protein localises to the cytoplasm. The protein resides in the mitochondrion. It localises to the cell projection. Its subcellular location is the axon. It is found in the secreted. The protein localises to the extracellular exosome. It carries out the reaction tRNA(Gly) + glycine + ATP = glycyl-tRNA(Gly) + AMP + diphosphate. It catalyses the reaction 2 ATP + H(+) = P(1),P(4)-bis(5'-adenosyl) tetraphosphate + diphosphate. Its function is as follows. Catalyzes the ATP-dependent ligation of glycine to the 3'-end of its cognate tRNA, via the formation of an aminoacyl-adenylate intermediate (Gly-AMP). Also produces diadenosine tetraphosphate (Ap4A), a universal pleiotropic signaling molecule needed for cell regulation pathways, by direct condensation of 2 ATPs. Thereby, may play a special role in Ap4A homeostasis. The sequence is that of Glycine--tRNA ligase (Gars1) from Mus musculus (Mouse).